The primary structure comprises 469 residues: MTQDSALLKAPEQTLRDGSNSRKVFIKTYGCQMNVYDSTRMSDALARDGYEPTEDMEEADLVLLNTCHIREKAAEKVYSALGRLREMKKKKAADGREMMIGVAGCVAQAEGEEILRRAPAVDVVIGPQTYHRLPEALRRAKEGQRVVDTEYAIEDKFEHLPVAESRKIRARGVTAFLTVQEGCDKFCTFCVVPYTRGSEVSRPVSQIVEEAEKLVEGGVREITLLGQNVNAWHGAGPRGEAWSLGDLLYRLAEIPGLARLRYTTSHPRDMDDRLIAAHRDLRALMPYLHLPVQSGSDRILKAMNRRHTAAEYLSLIERIRAVRPDIALSGDFITGFPGETDKDFEDTLRLVEEVRYAQAFSFKYSTRPGTPGAELKDQVPEEIKAERLERLQALLLKQQQEFAESCIGKEIDLLLEKPGRMPGQLIGRSPWLQSVNVDAKASQIGDIIKVRITGTGTNSLFAERAEAAV.

The region spanning 22 to 142 is the MTTase N-terminal domain; it reads RKVFIKTYGC…LPEALRRAKE (121 aa). Residues C31, C67, C105, C183, C187, and C190 each coordinate [4Fe-4S] cluster. The region spanning 169 to 401 is the Radical SAM core domain; sequence RARGVTAFLT…QALLLKQQQE (233 aa). The TRAM domain maps to 404–466; the sequence is ESCIGKEIDL…TNSLFAERAE (63 aa).

This sequence belongs to the methylthiotransferase family. MiaB subfamily. Monomer. [4Fe-4S] cluster is required as a cofactor.

The protein localises to the cytoplasm. The enzyme catalyses N(6)-dimethylallyladenosine(37) in tRNA + (sulfur carrier)-SH + AH2 + 2 S-adenosyl-L-methionine = 2-methylsulfanyl-N(6)-dimethylallyladenosine(37) in tRNA + (sulfur carrier)-H + 5'-deoxyadenosine + L-methionine + A + S-adenosyl-L-homocysteine + 2 H(+). Its function is as follows. Catalyzes the methylthiolation of N6-(dimethylallyl)adenosine (i(6)A), leading to the formation of 2-methylthio-N6-(dimethylallyl)adenosine (ms(2)i(6)A) at position 37 in tRNAs that read codons beginning with uridine. This Rhizobium etli (strain ATCC 51251 / DSM 11541 / JCM 21823 / NBRC 15573 / CFN 42) protein is tRNA-2-methylthio-N(6)-dimethylallyladenosine synthase.